The primary structure comprises 209 residues: Large ribosomal subunit protein uL3 (209 aa).

The disordered stretch occupies residues 127 to 151 (SGGPSSHGSKFHRHLGGTGQATTPA).

Belongs to the universal ribosomal protein uL3 family. In terms of assembly, part of the 50S ribosomal subunit. Forms a cluster with proteins L14 and L19.

In terms of biological role, one of the primary rRNA binding proteins, it binds directly near the 3'-end of the 23S rRNA, where it nucleates assembly of the 50S subunit. The sequence is that of Large ribosomal subunit protein uL3 from Borrelia turicatae (strain 91E135).